Here is a 508-residue protein sequence, read N- to C-terminus: ATP synthase subunit alpha, chloroplastic (508 aa).

ATP is bound at residue Gly172–Thr179.

Belongs to the ATPase alpha/beta chains family. In terms of assembly, F-type ATPases have 2 components, CF(1) - the catalytic core - and CF(0) - the membrane proton channel. CF(1) has five subunits: alpha(3), beta(3), gamma(1), delta(1), epsilon(1). CF(0) has four main subunits: a, b, b' and c.

The protein resides in the plastid. It is found in the chloroplast thylakoid membrane. It catalyses the reaction ATP + H2O + 4 H(+)(in) = ADP + phosphate + 5 H(+)(out). Produces ATP from ADP in the presence of a proton gradient across the membrane. The alpha chain is a regulatory subunit. The sequence is that of ATP synthase subunit alpha, chloroplastic from Angiopteris evecta (Mule's foot fern).